The primary structure comprises 60 residues: Alpha-conotoxin-like 289 (60 aa).

The N-terminal stretch at 1–16 is a signal peptide; that stretch reads MFTVFLLVVLATTVVS. Positions 17–42 are excised as a propeptide; that stretch reads FTSDRAFRGRNAAAKASGLVGLTDKR. Position 43 is a pyrrolidone carboxylic acid (Gln-43). Cystine bridges form between Cys-45–Cys-51 and Cys-46–Cys-59. Residues 47–49 form a ser-Xaa-Pro motif, crucial for potent interaction with nAChR region; that stretch reads SYP. Cys-59 carries the cysteine amide modification.

This sequence belongs to the conotoxin A superfamily. Expressed by the venom duct.

Its subcellular location is the secreted. Functionally, alpha-conotoxins act on postsynaptic membranes, they bind to the nicotinic acetylcholine receptors (nAChR) and thus inhibit them. This is Alpha-conotoxin-like 289 from Conus ammiralis (Admiral cone).